A 519-amino-acid chain; its full sequence is General transcription factor 3C polypeptide 5 (519 aa).

Ala2 is modified (N-acetylalanine). Residues 465–519 form a disordered region; the sequence is ALFSSSAKADGGKEQLTYESGEDEEDEEEEEEEEEDFKPSDGSENEMETEILDYV. Composition is skewed to acidic residues over residues 484–500 and 507–519; these read SGED…EEED and SENE…LDYV.

It belongs to the TFIIIC subunit 5 family. Part of the TFIIIC subcomplex TFIIIC2, consisting of six subunits, GTF3C1, GTF3C2, GTF3C3, GTF3C4, GTF3C5 and GTF3C6. Interacts with BRF1, GTF3C6 and TBP.

It is found in the nucleus. Functionally, involved in RNA polymerase III-mediated transcription. Integral, tightly associated component of the DNA-binding TFIIIC2 subcomplex that directly binds tRNA and virus-associated RNA promoters. The polypeptide is General transcription factor 3C polypeptide 5 (GTF3C5) (Homo sapiens (Human)).